The primary structure comprises 308 residues: CASP-like protein 4A2 (308 aa).

The segment at Met-1–Ala-135 is disordered. Residues Met-1–Thr-161 are Cytoplasmic-facing. Gly residues predominate over residues Gly-22–Ala-31. Residues Gly-32–Gly-44 show a composition bias toward low complexity. 2 stretches are compositionally biased toward pro residues: residues Arg-54–Pro-65 and Phe-89–Arg-132. Residues Ala-162–Ala-182 form a helical membrane-spanning segment. Residues Asp-183 to Glu-203 lie on the Extracellular side of the membrane. Asn-195 carries an N-linked (GlcNAc...) asparagine glycan. A helical membrane pass occupies residues Ala-204–Met-224. At Arg-225–Asp-240 the chain is on the cytoplasmic side. The helical transmembrane segment at Phe-241–Val-262 threads the bilayer. The Extracellular portion of the chain corresponds to Gly-263 to Ser-280. Asn-279 carries an N-linked (GlcNAc...) asparagine glycan. The chain crosses the membrane as a helical span at residues Ser-281 to Tyr-301. Over Asn-302 to Ile-308 the chain is Cytoplasmic.

Belongs to the Casparian strip membrane proteins (CASP) family. In terms of assembly, homodimer and heterodimers.

The protein resides in the cell membrane. This Oryza sativa subsp. japonica (Rice) protein is CASP-like protein 4A2.